The following is a 248-amino-acid chain: Aspartate/glutamate leucyltransferase (248 aa).

The protein belongs to the R-transferase family. Bpt subfamily.

The protein localises to the cytoplasm. It carries out the reaction N-terminal L-glutamyl-[protein] + L-leucyl-tRNA(Leu) = N-terminal L-leucyl-L-glutamyl-[protein] + tRNA(Leu) + H(+). The enzyme catalyses N-terminal L-aspartyl-[protein] + L-leucyl-tRNA(Leu) = N-terminal L-leucyl-L-aspartyl-[protein] + tRNA(Leu) + H(+). Functions in the N-end rule pathway of protein degradation where it conjugates Leu from its aminoacyl-tRNA to the N-termini of proteins containing an N-terminal aspartate or glutamate. This Methylorubrum extorquens (strain PA1) (Methylobacterium extorquens) protein is Aspartate/glutamate leucyltransferase.